The primary structure comprises 246 residues: FAD synthetase (246 aa).

The protein belongs to the RibF family.

It carries out the reaction FMN + ATP + H(+) = FAD + diphosphate. It functions in the pathway cofactor biosynthesis; FAD biosynthesis; FAD from FMN: step 1/1. Catalyzes the adenylation of flavin mononucleotide (FMN) to form flavin adenine dinucleotide (FAD) coenzyme. Can also catalyze, with lower efficiency, the adenylation of the toxic riboflavin analogs 8-demethyl-8-aminoriboflavin mononucleotide (AFMN) and roseoflavin mononucleotide (RoFMN) to 8-demethyl-8-aminoriboflavin adenine dinucleotide (AFAD) and roseoflavin adenine dinucleotide (RoFAD), respectively. In Listeria monocytogenes serovar 1/2a (strain ATCC BAA-679 / EGD-e), this protein is FAD synthetase.